The sequence spans 102 residues: Small ribosomal subunit protein uS10 (102 aa).

The protein belongs to the universal ribosomal protein uS10 family. Part of the 30S ribosomal subunit.

In terms of biological role, involved in the binding of tRNA to the ribosomes. The protein is Small ribosomal subunit protein uS10 of Methanococcus maripaludis (strain C6 / ATCC BAA-1332).